The chain runs to 99 residues: UPF0122 protein UU142 (99 aa).

It belongs to the UPF0122 family.

Functionally, might take part in the signal recognition particle (SRP) pathway. This is inferred from the conservation of its genetic proximity to ftsY/ffh. May be a regulatory protein. This chain is UPF0122 protein UU142, found in Ureaplasma parvum serovar 3 (strain ATCC 700970).